Consider the following 435-residue polypeptide: Xylose isomerase (435 aa).

Active-site residues include H100 and D103. Residues E231, E267, H270, D295, D306, D308, and D338 each contribute to the Mg(2+) site.

The protein belongs to the xylose isomerase family. Homotetramer. Mg(2+) serves as cofactor.

It localises to the cytoplasm. It catalyses the reaction alpha-D-xylose = alpha-D-xylulofuranose. This chain is Xylose isomerase, found in Brucella suis (strain ATCC 23445 / NCTC 10510).